We begin with the raw amino-acid sequence, 204 residues long: Large ribosomal subunit protein bL25 (204 aa).

Belongs to the bacterial ribosomal protein bL25 family. CTC subfamily. In terms of assembly, part of the 50S ribosomal subunit; part of the 5S rRNA/L5/L18/L25 subcomplex. Contacts the 5S rRNA. Binds to the 5S rRNA independently of L5 and L18.

In terms of biological role, this is one of the proteins that binds to the 5S RNA in the ribosome where it forms part of the central protuberance. The chain is Large ribosomal subunit protein bL25 from Burkholderia pseudomallei (strain 668).